The primary structure comprises 377 residues: 3-dehydroquinate synthase (377 aa).

NAD(+) contacts are provided by residues 115-119, 139-140, lysine 152, and lysine 161; these read GVIGD and TS. Residues glutamate 194, histidine 256, and histidine 275 each contribute to the Zn(2+) site.

Belongs to the sugar phosphate cyclases superfamily. Dehydroquinate synthase family. It depends on NAD(+) as a cofactor. Requires Co(2+) as cofactor. The cofactor is Zn(2+).

Its subcellular location is the cytoplasm. The catalysed reaction is 7-phospho-2-dehydro-3-deoxy-D-arabino-heptonate = 3-dehydroquinate + phosphate. The protein operates within metabolic intermediate biosynthesis; chorismate biosynthesis; chorismate from D-erythrose 4-phosphate and phosphoenolpyruvate: step 2/7. Its function is as follows. Catalyzes the conversion of 3-deoxy-D-arabino-heptulosonate 7-phosphate (DAHP) to dehydroquinate (DHQ). This is 3-dehydroquinate synthase from Rhizobium meliloti (strain 1021) (Ensifer meliloti).